The sequence spans 156 residues: MNLNATILGQAIAFVLFVLFCMKYVWPPIMAAIEKRQKEIADGLSSAERAKKDLELAQSNATDQLKKAKAEAQVIIEQANKRRAQILDEAKAEAEQERNKIVAQAQAEIEAERKRAREELRKQVAILAVAGAEKIIERSVDEAANSDIVNKLVAEL.

A helical transmembrane segment spans residues 11–31 (AIAFVLFVLFCMKYVWPPIMA).

This sequence belongs to the ATPase B chain family. As to quaternary structure, F-type ATPases have 2 components, F(1) - the catalytic core - and F(0) - the membrane proton channel. F(1) has five subunits: alpha(3), beta(3), gamma(1), delta(1), epsilon(1). F(0) has three main subunits: a(1), b(2) and c(10-14). The alpha and beta chains form an alternating ring which encloses part of the gamma chain. F(1) is attached to F(0) by a central stalk formed by the gamma and epsilon chains, while a peripheral stalk is formed by the delta and b chains.

Its subcellular location is the cell inner membrane. F(1)F(0) ATP synthase produces ATP from ADP in the presence of a proton or sodium gradient. F-type ATPases consist of two structural domains, F(1) containing the extramembraneous catalytic core and F(0) containing the membrane proton channel, linked together by a central stalk and a peripheral stalk. During catalysis, ATP synthesis in the catalytic domain of F(1) is coupled via a rotary mechanism of the central stalk subunits to proton translocation. Its function is as follows. Component of the F(0) channel, it forms part of the peripheral stalk, linking F(1) to F(0). This chain is ATP synthase subunit b, found in Cronobacter sakazakii (strain ATCC BAA-894) (Enterobacter sakazakii).